A 182-amino-acid polypeptide reads, in one-letter code: MEIKFTIKQVVAVGIGAALFVVIGMINIPTPVPNTSIQLQYAVQALLSIIFGPIIGLLVGVIGHAIKDSLAGYGLWWTWIIASGLFGLVVGLFRKYVRVINGVFDWKDILIFNLIQLLANALVWGVLAPLGDVVIYQEAAEKVFAQGIVAGIANGVSVAIAGTLLLLAYAGTQTRAGSLKKD.

5 helical membrane passes run 10–30, 46–66, 73–93, 109–129, and 148–168; these read VVAV…NIPT, LLSI…GHAI, YGLW…VGLF, ILIF…VLAP, and IVAG…LLLA.

It belongs to the UPF0397 family.

It is found in the cell membrane. This is UPF0397 protein SPH_0594 from Streptococcus pneumoniae (strain Hungary19A-6).